The primary structure comprises 154 residues: Cytochrome c-550 (154 aa).

A signal peptide spans 1–20 (MKISIYATLAALSLALPAVA). The residue at position 21 (Gln-21) is a Pyrrolidone carboxylic acid. Cys-35, Cys-38, His-39, and Met-120 together coordinate heme c. The propeptide occupies 150-154 (EGAAN).

Binds 1 heme c group covalently per subunit.

The polypeptide is Cytochrome c-550 (cyc) (Paracoccus versutus (Thiobacillus versutus)).